The following is a 72-amino-acid chain: Protein P13 (72 aa).

It is found in the virion membrane. This Pseudomonas phage phi6 (Bacteriophage phi-6) protein is Protein P13 (P13).